The following is a 108-amino-acid chain: UPF0060 membrane protein RSKD131_0092 (108 aa).

Transmembrane regions (helical) follow at residues 5 to 25 (LAAYAGAALAEIAGCFAVWAW), 32 to 52 (ALWLVPGALSLGAFAWLLALT), 62 to 82 (AVYGGIYVAASLLWLWAVEGV), and 86 to 106 (RWDMGGAALVLAGAAVILWAP).

It belongs to the UPF0060 family.

Its subcellular location is the cell inner membrane. This is UPF0060 membrane protein RSKD131_0092 from Cereibacter sphaeroides (strain KD131 / KCTC 12085) (Rhodobacter sphaeroides).